We begin with the raw amino-acid sequence, 546 residues long: 5'-nucleotidase domain-containing protein 3 (546 aa).

The Nucleophile role is filled by aspartate 100. Positions 100 and 102 each coordinate Mg(2+). The active-site Proton donor is the aspartate 102. 249–257 (KDSIRDVHI) is a binding site for substrate. Mg(2+) is bound at residue aspartate 387.

This sequence belongs to the 5'(3')-deoxyribonucleotidase family. Mg(2+) serves as cofactor.

The polypeptide is 5'-nucleotidase domain-containing protein 3 (Nt5dc3) (Mus musculus (Mouse)).